We begin with the raw amino-acid sequence, 459 residues long: Trigger factor (459 aa).

In terms of domain architecture, PPIase FKBP-type spans 166–245; it reads GDFANIDLTA…VNSVKAEELP (80 aa).

This sequence belongs to the FKBP-type PPIase family. Tig subfamily.

It localises to the cytoplasm. It catalyses the reaction [protein]-peptidylproline (omega=180) = [protein]-peptidylproline (omega=0). In terms of biological role, involved in protein export. Acts as a chaperone by maintaining the newly synthesized protein in an open conformation. Functions as a peptidyl-prolyl cis-trans isomerase. The chain is Trigger factor from Bifidobacterium longum (strain DJO10A).